An 801-amino-acid polypeptide reads, in one-letter code: Na(+)/H(+) antiporter subunit A1 (801 aa).

Helical transmembrane passes span 4-25 (LHIA…YRFF), 30-49 (LGWF…LTLI), 79-101 (LGLL…SIGY), 108-127 (LGNF…GVVL), 131-153 (VIIL…SFWR), 166-188 (LIIT…IPTQ), 208-230 (FIFA…PFYI), 243-265 (SAYL…MTPI), 270-289 (QGWV…WASL), 302-324 (AFST…ISYH), 339-361 (AAIF…TGAV), 373-395 (LGGL…LSMA), 429-451 (YLFP…KFIM), 472-494 (ILML…FPGI), 526-548 (AFLS…SYWV), 589-611 (NNLV…SVPF), 621-641 (IRIF…LILF), 646-668 (LFSI…FFKA), 672-694 (ALTQ…YHLP), 707-729 (LTNA…IAYG), and 767-784 (LFES…YTMI).

The protein belongs to the CPA3 antiporters (TC 2.A.63) subunit A family. In terms of assembly, may form a heterooligomeric complex that consists of seven subunits: mnhA1, mnhB1, mnhC1, mnhD1, mnhE1, mnhF1 and mnhG1.

The protein resides in the cell membrane. Its activity is regulated as follows. Na(+) extrusion is completely inhibited by the H(+) conductor carbonyl cyanide m-chlorophenylhydrazone (CCCP). Its function is as follows. Mnh complex is a Na(+)/H(+) antiporter involved in Na(+) excretion. The protein is Na(+)/H(+) antiporter subunit A1 (mnhA1) of Staphylococcus aureus (strain MSSA476).